The primary structure comprises 314 residues: BTB/POZ domain-containing adapter for CUL3-mediated RhoA degradation protein 2 (314 aa).

The region spanning 32–100 (KYVRLNVGGS…LRDDTIALPK (69 aa)) is the BTB domain.

This sequence belongs to the BACURD family. Component of the BCR(TNFAIP1) E3 ubiquitin ligase complex, at least composed of CUL3, TNFAIP1/BACURD2 and RBX1.

The protein localises to the cytoplasm. The protein resides in the nucleus. Its subcellular location is the endosome. It functions in the pathway protein modification; protein ubiquitination. Its function is as follows. Substrate-specific adapter of a BCR (BTB-CUL3-RBX1) E3 ubiquitin-protein ligase complex involved in regulation of cytoskeleton structure. The BCR(TNFAIP1) E3 ubiquitin ligase complex mediates the ubiquitination of target proteins, leading to their degradation by the proteasome. The sequence is that of BTB/POZ domain-containing adapter for CUL3-mediated RhoA degradation protein 2 (TNFAIP1) from Gallus gallus (Chicken).